A 183-amino-acid polypeptide reads, in one-letter code: Peptide deformylase (183 aa).

2 residues coordinate Fe cation: cysteine 110 and histidine 153. Glutamate 154 is a catalytic residue. A Fe cation-binding site is contributed by histidine 157.

This sequence belongs to the polypeptide deformylase family. Fe(2+) is required as a cofactor.

It carries out the reaction N-terminal N-formyl-L-methionyl-[peptide] + H2O = N-terminal L-methionyl-[peptide] + formate. Functionally, removes the formyl group from the N-terminal Met of newly synthesized proteins. Requires at least a dipeptide for an efficient rate of reaction. N-terminal L-methionine is a prerequisite for activity but the enzyme has broad specificity at other positions. This chain is Peptide deformylase, found in Shouchella clausii (strain KSM-K16) (Alkalihalobacillus clausii).